The following is a 565-amino-acid chain: Nephrocystin-1 (565 aa).

The segment covering 1–32 has biased composition (acidic residues); the sequence is GEEEDEEEEEEEESEEGGGEEEESEEEEEEKQ. 2 disordered regions span residues 1 to 46 and 95 to 132; these read GEEE…KEYI and VEPY…KQRT. The stretch at 2–48 forms a coiled coil; it reads EEEDEEEEEEEESEEGGGEEEESEEEEEEKQENESHHQATSKEYIAV. At serine 14 the chain carries Phosphoserine. Residues 40–100 enclose the SH3 domain; sequence ATSKEYIAVG…PRTYVEPYNK (61 aa). Residues 104-118 are compositionally biased toward acidic residues; the sequence is QDTSEEEDSEEDVEV. Position 182 is a phosphotyrosine; by FAK2 (tyrosine 182). Tyrosine 554 carries the phosphotyrosine; by SRC modification.

It belongs to the nephrocystin-1 family. In terms of assembly, interacts with Crk-associated substrate BCAR1, NPHP4, PTK2B/PYK2 and tensin. Interacts with INVS and NPHP3. Interacts with AHI1 and TNK2. Interacts with NPHP4 in a complex containing NPHP1, NPHP4 and RPGRIP1L/NPHP8. Interacts with IQCB1; the interaction likely requires additional interactors. Interacts with KIF7. Interacts with ANKS3. Interacts with SPATA7. Interacts with FLNA. Expressed in renal cells (at protein level).

The protein localises to the cell junction. The protein resides in the adherens junction. It localises to the cell projection. Its subcellular location is the cilium. It is found in the cytoplasm. The protein localises to the cytoskeleton. The protein resides in the cilium axoneme. It localises to the tight junction. Functionally, together with BCAR1 it may play a role in the control of epithelial cell polarity. Involved in the organization of apical junctions in kidney cells together with NPHP4 and RPGRIP1L/NPHP8. Does not seem to be strictly required for ciliogenesis. Seems to help to recruit PTK2B/PYK2 to cell matrix adhesions, thereby initiating phosphorylation of PTK2B/PYK2 and PTK2B/PYK2-dependent signaling. May play a role in the regulation of intraflagellar transport (IFT) during cilia assembly. Required for normal retina development. In connecting photoreceptor cilia influences the movement of some IFT proteins such as IFT88 and WDR19. Involved in spermatogenesis. This Canis lupus familiaris (Dog) protein is Nephrocystin-1 (NPHP1).